The primary structure comprises 369 residues: DNA polymerase IV 2 (369 aa).

The UmuC domain occupies 17–201 (VFHVDMDSFF…LPVSRIPGVG (185 aa)). Positions 21 and 119 each coordinate Mg(2+). Glutamate 120 is an active-site residue.

The protein belongs to the DNA polymerase type-Y family. In terms of assembly, monomer. Mg(2+) is required as a cofactor.

The protein localises to the cytoplasm. It catalyses the reaction DNA(n) + a 2'-deoxyribonucleoside 5'-triphosphate = DNA(n+1) + diphosphate. Functionally, poorly processive, error-prone DNA polymerase involved in untargeted mutagenesis. Copies undamaged DNA at stalled replication forks, which arise in vivo from mismatched or misaligned primer ends. These misaligned primers can be extended by PolIV. Exhibits no 3'-5' exonuclease (proofreading) activity. May be involved in translesional synthesis. This is DNA polymerase IV 2 (dbh2) from Methanosarcina mazei (strain ATCC BAA-159 / DSM 3647 / Goe1 / Go1 / JCM 11833 / OCM 88) (Methanosarcina frisia).